A 289-amino-acid chain; its full sequence is Oxaloacetate decarboxylase (289 aa).

Ser-47 is a binding site for substrate. Asp-85 serves as a coordination point for Mg(2+). Substrate is bound by residues Arg-156 and His-232.

The protein belongs to the isocitrate lyase/PEP mutase superfamily. Oxaloacetate decarboxylase family. In terms of assembly, homotetramer; dimer of dimers. It depends on Mg(2+) as a cofactor.

The catalysed reaction is oxaloacetate + H(+) = pyruvate + CO2. In terms of biological role, catalyzes the decarboxylation of oxaloacetate into pyruvate. Seems to play a role in maintaining cellular concentrations of bicarbonate and pyruvate. This Rhodopseudomonas palustris (strain BisB5) protein is Oxaloacetate decarboxylase.